The following is a 599-amino-acid chain: DNA-directed RNA polymerase III subunit RPC3 (599 aa).

The disordered stretch occupies residues 335 to 371 (PRLDGLRPRGKGSRSVSPRPQSKRVKTEEGYTKTGDY). Over residues 359 to 371 (VKTEEGYTKTGDY) the composition is skewed to basic and acidic residues. The tract at residues 526–547 (IYKSLSRCFERVAAERAKLPIL) is leucine-zipper.

The protein belongs to the RNA polymerase beta chain family. Component of the RNA polymerase III (Pol III) complex consisting of 17 subunits.

The protein localises to the nucleus. In terms of biological role, DNA-dependent RNA polymerase catalyzes the transcription of DNA into RNA using the four ribonucleoside triphosphates as substrates. Specific core component of RNA polymerase III which synthesizes small RNAs, such as 5S rRNA and tRNAs. The protein is DNA-directed RNA polymerase III subunit RPC3 (RPC82) of Yarrowia lipolytica (strain CLIB 122 / E 150) (Yeast).